Reading from the N-terminus, the 354-residue chain is MTTMSRSFGRSDLANGAHRDVAVWLLACCFMVAVMVLLGGLTRLTHSGLSMVEWEPIRGIIPPLNDTDWQLFFEKYKQTPEYIKVNAGMSLAEFKGIFWLEYIHRVWGRLIGVVFGLPFLWLALSGRIGRAMVPRLAGVFLLGAAQGGMGWFMVKSGLVDNPAVSHYRLTAHLALAFLIHGWMFWLALDILADHRSTRRRAHGDVGAVRSWMLGLTGLVIVTLLFGGLVAGLKAGLIYNTWPLMDGAIVPKDLFPEGFHSLFEDIKTVQFGHRTLAEITIVVALVGWFRTRARLGTQTPAAIHAVGLMALLQVGLGIGTLVMVVPVWLASAHQMGAMALLTLCLWALHDLGRRI.

Helical transmembrane passes span 21–41 (VAVWLLACCFMVAVMVLLGGL), 106–126 (VWGRLIGVVFGLPFLWLALSG), 139–159 (VFLLGAAQGGMGWFMVKSGLV), 171–191 (AHLALAFLIHGWMFWLALDIL), 212–232 (MLGLTGLVIVTLLFGGLVAGL), 268–288 (VQFGHRTLAEITIVVALVGWF), 304–324 (AVGLMALLQVGLGIGTLVMVV), and 326–346 (VWLASAHQMGAMALLTLCLWA). H272 contributes to the heme binding site. H332 contributes to the heme binding site.

This sequence belongs to the COX15/CtaA family. Type 2 subfamily. As to quaternary structure, interacts with CtaB. Requires heme b as cofactor.

Its subcellular location is the cell membrane. The catalysed reaction is Fe(II)-heme o + 2 A + H2O = Fe(II)-heme a + 2 AH2. It participates in porphyrin-containing compound metabolism; heme A biosynthesis; heme A from heme O: step 1/1. Its function is as follows. Catalyzes the conversion of heme O to heme A by two successive hydroxylations of the methyl group at C8. The first hydroxylation forms heme I, the second hydroxylation results in an unstable dihydroxymethyl group, which spontaneously dehydrates, resulting in the formyl group of heme A. The protein is Heme A synthase of Paramagnetospirillum magneticum (strain ATCC 700264 / AMB-1) (Magnetospirillum magneticum).